A 380-amino-acid polypeptide reads, in one-letter code: Flap endonuclease 1 (380 aa).

Positions M1–R104 are N-domain. A Mg(2+)-binding site is contributed by D34. DNA is bound by residues R47 and R70. Positions 86, 158, 160, 179, and 181 each coordinate Mg(2+). Residues D122–Y253 form an I-domain region. E158 is a DNA binding site. Residues G231 and D233 each contribute to the DNA site. Residue D233 participates in Mg(2+) binding. Positions L328–K380 are disordered. Positions T336–F344 are interaction with PCNA. Basic residues predominate over residues A365–K380.

It belongs to the XPG/RAD2 endonuclease family. FEN1 subfamily. In terms of assembly, interacts with PCNA. Three molecules of FEN1 bind to one PCNA trimer with each molecule binding to one PCNA monomer. PCNA stimulates the nuclease activity without altering cleavage specificity. The cofactor is Mg(2+). In terms of processing, phosphorylated. Phosphorylation upon DNA damage induces relocalization to the nuclear plasma.

The protein resides in the nucleus. Its subcellular location is the nucleolus. It is found in the nucleoplasm. The protein localises to the mitochondrion. Functionally, structure-specific nuclease with 5'-flap endonuclease and 5'-3' exonuclease activities involved in DNA replication and repair. During DNA replication, cleaves the 5'-overhanging flap structure that is generated by displacement synthesis when DNA polymerase encounters the 5'-end of a downstream Okazaki fragment. It enters the flap from the 5'-end and then tracks to cleave the flap base, leaving a nick for ligation. Also involved in the long patch base excision repair (LP-BER) pathway, by cleaving within the apurinic/apyrimidinic (AP) site-terminated flap. Acts as a genome stabilization factor that prevents flaps from equilibrating into structures that lead to duplications and deletions. Also possesses 5'-3' exonuclease activity on nicked or gapped double-stranded DNA, and exhibits RNase H activity. Also involved in replication and repair of rDNA and in repairing mitochondrial DNA. The protein is Flap endonuclease 1 of Branchiostoma floridae (Florida lancelet).